Consider the following 177-residue polypeptide: Transmembrane protein 275 (177 aa).

Residues 1-20 (MPQAKKSTETLAPAPPGRSR) are disordered. Transmembrane regions (helical) follow at residues 36–56 (GLCV…AAFL) and 63–83 (LVVG…CCVC). The disordered stretch occupies residues 113 to 177 (ESSERTAQDT…LNFPRDPAAS (65 aa)). A compositionally biased stretch (low complexity) spans 128–161 (SPAASAASSGRSSPGPGLFALDPPAPATAAPYLP).

It localises to the membrane. The sequence is that of Transmembrane protein 275 from Mus musculus (Mouse).